The sequence spans 231 residues: Phosphatidylserine decarboxylase proenzyme (231 aa).

The Schiff-base intermediate with substrate; via pyruvic acid role is filled by S188. Residue S188 is modified to Pyruvic acid (Ser); by autocatalysis.

This sequence belongs to the phosphatidylserine decarboxylase family. PSD-A subfamily. As to quaternary structure, heterodimer of a large membrane-associated beta subunit and a small pyruvoyl-containing alpha subunit. Requires pyruvate as cofactor. Is synthesized initially as an inactive proenzyme. Formation of the active enzyme involves a self-maturation process in which the active site pyruvoyl group is generated from an internal serine residue via an autocatalytic post-translational modification. Two non-identical subunits are generated from the proenzyme in this reaction, and the pyruvate is formed at the N-terminus of the alpha chain, which is derived from the carboxyl end of the proenzyme. The post-translation cleavage follows an unusual pathway, termed non-hydrolytic serinolysis, in which the side chain hydroxyl group of the serine supplies its oxygen atom to form the C-terminus of the beta chain, while the remainder of the serine residue undergoes an oxidative deamination to produce ammonia and the pyruvoyl prosthetic group on the alpha chain.

It is found in the cell membrane. The enzyme catalyses a 1,2-diacyl-sn-glycero-3-phospho-L-serine + H(+) = a 1,2-diacyl-sn-glycero-3-phosphoethanolamine + CO2. It participates in phospholipid metabolism; phosphatidylethanolamine biosynthesis; phosphatidylethanolamine from CDP-diacylglycerol: step 2/2. In terms of biological role, catalyzes the formation of phosphatidylethanolamine (PtdEtn) from phosphatidylserine (PtdSer). The protein is Phosphatidylserine decarboxylase proenzyme of Rickettsia peacockii (strain Rustic).